The chain runs to 433 residues: Metacaspase-1 (433 aa).

Residues 1-123 (MYPGRAKPTY…PPSQVQHTGP (123 aa)) are disordered. Residues 9-44 (TYNNQQAQQAQSQVGYQTGYSNAQPQQQYYTAPQQQ) are compositionally biased toward low complexity. 2 stretches are compositionally biased toward polar residues: residues 45-55 (NVSGSSMSFQH) and 83-109 (QQNY…QQPQ). Active-site residues include His-222 and Cys-278.

Belongs to the peptidase C14B family.

In terms of biological role, involved in cell death (apoptosis). The polypeptide is Metacaspase-1 (MCA1) (Kluyveromyces lactis (strain ATCC 8585 / CBS 2359 / DSM 70799 / NBRC 1267 / NRRL Y-1140 / WM37) (Yeast)).